Here is a 277-residue protein sequence, read N- to C-terminus: Proteasome subunit beta type-7 (277 aa).

Positions 1 to 43 are cleaved as a propeptide — removed in mature form; it reads MAAVSVYAPPVGGFSFDNCRRNAVLEADFAKRGYKLPKVRKTG. T44 serves as the catalytic Nucleophile.

The protein belongs to the peptidase T1B family. As to quaternary structure, the 26S proteasome consists of a 20S proteasome core and two 19S regulatory subunits. The 20S proteasome core is a barrel-shaped complex made of 28 subunits that are arranged in four stacked rings. The two outer rings are each formed by seven alpha subunits, and the two inner rings are formed by seven beta subunits. The proteolytic activity is exerted by three beta-subunits PSMB5, PSMB6 and PSMB7. (Microbial infection) Interacts with HIV-1 Tat protein. As to expression, expressed at a low level in colonic mucosa. Up-regulated in colorectal cancer tissues.

The protein resides in the cytoplasm. The protein localises to the nucleus. It carries out the reaction Cleavage of peptide bonds with very broad specificity.. Functionally, component of the 20S core proteasome complex involved in the proteolytic degradation of most intracellular proteins. This complex plays numerous essential roles within the cell by associating with different regulatory particles. Associated with two 19S regulatory particles, forms the 26S proteasome and thus participates in the ATP-dependent degradation of ubiquitinated proteins. The 26S proteasome plays a key role in the maintenance of protein homeostasis by removing misfolded or damaged proteins that could impair cellular functions, and by removing proteins whose functions are no longer required. Associated with the PA200 or PA28, the 20S proteasome mediates ubiquitin-independent protein degradation. This type of proteolysis is required in several pathways including spermatogenesis (20S-PA200 complex) or generation of a subset of MHC class I-presented antigenic peptides (20S-PA28 complex). Within the 20S core complex, PSMB7 displays a trypsin-like activity. The protein is Proteasome subunit beta type-7 of Homo sapiens (Human).